A 918-amino-acid chain; its full sequence is Bromodomain testis-specific protein (918 aa).

Residues 1-26 form a disordered region; the sequence is MSDVKPPQHFTMNGNPPPPEFKNPKK. The Bromo 1 domain occupies 29 to 135; it reads RLTNHLQYIE…KLFLEKVAEM (107 aa). A Nuclear localization signal motif is present at residues 204-215; the sequence is NGVKRKADTTTP. 5 disordered regions span residues 241-267, 379-430, 575-712, 738-764, and 862-899; these read RGSGRPIKPPCKDLPESPPQHQVGRRT, EPKN…RAHR, KNKP…SLVS, IPPLLSPLTSPSAAMPATGSQSTSSSQ, and DTPKAPEPSSVLQNSVDREREMARKREQERRRREAMSG. One can recognise a Bromo 2 domain in the interval 267–376; that stretch reads TKLSERLKYC…DVFEFRFSKI (110 aa). Residues 399 to 416 are compositionally biased toward low complexity; it reads SPSSSESSDSESSSPENS. A coiled-coil region spans residues 426–452; sequence ERAHRLASLEEQQLKAVREQLQLLTQT. An NET domain is found at 496–578; that stretch reads DSEEEMNTLP…GCLRKKKNKP (83 aa). Over residues 575–584 the composition is skewed to basic residues; the sequence is KNKPPKKSKI. The segment covering 605 to 617 has biased composition (basic and acidic residues); it reads KIETDGEIKDTTH. 2 stretches are compositionally biased toward low complexity: residues 622-648 and 739-764; these read SDSSSSSSSSDSSSSDSSSSDSCDSDS and PPLLSPLTSPSAAMPATGSQSTSSSQ. The stretch at 815–902 forms a coiled coil; sequence EKELTTASRG…RREAMSGVID (88 aa). The segment covering 877-896 has biased composition (basic and acidic residues); it reads VDREREMARKREQERRRREA.

This sequence belongs to the BET family.

The protein localises to the nucleus. In terms of biological role, testis-specific chromatin protein that specifically binds histone H4 acetylated at 'Lys-5' and 'Lys-8' (H4K5ac and H4K8ac, respectively) and plays a key role in spermatogenesis. Required in late pachytene spermatocytes: plays a role in meiotic and post-meiotic cells by binding to acetylated histones at the promoter of specific meiotic and post-meiotic genes, facilitating their activation at the appropriate time. In the post-meiotic phase of spermatogenesis, binds to hyperacetylated histones and participates in their general removal from DNA. Also recognizes and binds a subset of butyrylated histones: able to bind histone H4 butyrylated at 'Lys-8' (H4K8ac), while it is not able to bind H4 butyrylated at 'Lys-5' (H4K5ac). This chain is Bromodomain testis-specific protein (brdt), found in Danio rerio (Zebrafish).